The following is a 513-amino-acid chain: MAEVGEIIEGCRLPVLRRNQDNEDEWPLAEILSVKDISGRKLFYVHYIDFNKRLDEWVTHERLDLKKIQFPKKEAKTPTKNGLPGSRPGSPEREVPASAQASGKTLPIPVQITLRFNLPKEREAIPGGEPDQPLSSSSCLQPNHRSTKRKVEVVSPATPVPSETAPASVFPQNGAARRAVAAQPGRKRKSNCLGTDEDSQDSSDGIPSAPRMTGSLVSDRSHDDIVTRMKNIECIELGRHRLKPWYFSPYPQELTTLPVLYLCEFCLKYGRSLKCLQRHLTKCDLRHPPGNEIYRKGTISFFEIDGRKNKSYSQNLCLLAKCFLDHKTLYYDTDPFLFYVMTEYDCKGFHIVGYFSKEKESTEDYNVACILTLPPYQRRGYGKLLIEFSYELSKVEGKTGTPEKPLSDLGLLSYRSYWSQTILEILMGLKSESGERPQITINEISEITSIKKEDVISTLQYLNLINYYKGQYILTLSEDIVDGHERAMLKRLLRIDSKCLHFTPKDWSKRGKW.

Positions 8–65 (IEGCRLPVLRRNQDNEDEWPLAEILSVKDISGRKLFYVHYIDFNKRLDEWVTHERLDL) constitute a Tudor-knot domain. Lys52 carries the N6-acetyllysine modification. Positions 69-106 (QFPKKEAKTPTKNGLPGSRPGSPEREVPASAQASGKTL) are disordered. Ser86 bears the Phosphoserine; by GSK3 mark. Ser90 bears the Phosphoserine; by CDK1 and CDK9 mark. N6-acetyllysine; by autocatalysis is present on residues Lys104 and Lys120. The tract at residues 122–220 (REAIPGGEPD…RMTGSLVSDR (99 aa)) is disordered. The span at 133 to 144 (PLSSSSCLQPNH) shows a compositional bias: polar residues. N6-acetyllysine; by autocatalysis occurs at positions 148, 150, 187, and 189. Residue Ser199 is modified to Phosphoserine. The MYST-type HAT domain maps to 227-504 (TRMKNIECIE…IDSKCLHFTP (278 aa)). Residues 260 to 285 (LYLCEFCLKYGRSLKCLQRHLTKCDL) form a C2HC MYST-type zinc finger. Lys327 is modified (N6-acetyllysine; by autocatalysis). An interaction with ATF2 region spans residues 368 to 513 (ACILTLPPYQ…PKDWSKRGKW (146 aa)). Acetyl-CoA contacts are provided by residues 370 to 372 (ILT) and 377 to 383 (QRRGYGK). Glu403 (proton donor/acceptor) is an active-site residue. 2 residues coordinate acetyl-CoA: Ser407 and Ser416. A Glycyl lysine isopeptide (Lys-Gly) (interchain with G-Cter in SUMO1); alternate cross-link involves residue Lys430. Lys430 is covalently cross-linked (Glycyl lysine isopeptide (Lys-Gly) (interchain with G-Cter in SUMO2); alternate). Lys451 is covalently cross-linked (Glycyl lysine isopeptide (Lys-Gly) (interchain with G-Cter in SUMO1)).

The protein belongs to the MYST (SAS/MOZ) family. As to quaternary structure, component of the NuA4 histone acetyltransferase complex which contains the catalytic subunit KAT5/TIP60 and the subunits EP400, TRRAP/PAF400, BRD8/SMAP, EPC1, DMAP1/DNMAP1, RUVBL1/TIP49, RUVBL2, ING3, actin, ACTL6A/BAF53A, MORF4L1/MRG15, MORF4L2/MRGX, MRGBP, YEATS4/GAS41, VPS72/YL1 and MEAF6. KAT5/TIP60, EPC1, and ING3 together constitute a minimal HAT complex termed Piccolo NuA4. The NuA4 complex interacts with MYC. Interacts with ATM. Interacts with JADE1. Interacts with PLA2G4A/CPLA2, EDNRA and HDAC7. Interacts with the cytoplasmic tail of APP and APBB1/FE65. Interacts with TRIM24 and TRIM68. Forms a complex with SENP6 and UBE2I in response to UV irradiation. Identified in a complex with HINT1. Interacts with ATF2 and CUL3. Interacts with NR1D2 (via N-terminus). Component of a SWR1-like complex. Interacts with FOXP3. Interacts with ZBTB49. Interacts with SRF. Interacts with ATF3; promoting autoacetylation and deubiquitination by USP7. Interacts with EP300/p300; interaction promotes KAT5 autoacetylation. Interacts with PRKDC; interaction is impaired following KAT5 sumoylation. Interacts with GPR50. Interacts with NME3; this interaction enables recruitment of NME3 at DNA damage sites where it plays a role in the repair of DNA. (Microbial infection) Interacts with HIV-1 TAT. In terms of processing, phosphorylated on Ser-86 and Ser-90; enhanced during G2/M phase. The phosphorylated form has a higher activity. Phosphorylation at Ser-90 by CDK1 or CDK9 is a prerequisite for phosphorylation at Ser-86 by GSK3. Phosphorylation at Ser-86 by GSK3 (GSK3A or GSK3B) activates acetyltransferase and acyltransferase activities. Phosphorylation at Ser-90 by CDK9 promotes KAT5 recruitment to chromatin. Phosphorylation by VRK1 following DNA damage promotes KAT5 association with chromatin and histone acetyltransferase activity. Post-translationally, autoacetylated. Autoacetylation is required for histone acetyltransferase activity. Autoacetylation at Lys-327 is facilitated by interaction with EP300/p300: it prevents ubiquitination and subsequent degradation by the proteasome and promotes acetylation of target proteins. Deacetylated by HDAC3 and SIRT1. Deacetylation by HDAC3 promotes its ubiquitination and cytoplasmic localization. Sumoylated by UBE2I at Lys-430 and Lys-451, leading to increase of its histone acetyltransferase activity in UV-induced DNA damage response, as well as its translocation to nuclear bodies. Sumoylation with SUMO2 by PIAS4 at Lys-430 promotes repair of DNA double-strand breaks (DSBs) via homologous recombination (HR). Sumoylation by PIAS4 impairs interaction with PRKDC, inhibiting non-homologous end joining (NHEJ)-mediated repair of DSBs, thereby facilitating HR. Desumoylated by SENP3. In terms of processing, ubiquitinated by MDM2, leading to its proteasome-dependent degradation. Ubiquitination is prevented by autoacetylation at Lys-327. Ubiquitinated following deacetylation by HDAC3, leading to cytoplasmic localization. Deubiquitinated by USP7 following interaction with ATF3, promoting its stabilization. Post-translationally, (Microbial infection) In case of HIV-1 infection, interaction with the viral Tat protein leads to KAT5 polyubiquitination and targets it to degradation.

The protein resides in the nucleus. Its subcellular location is the chromosome. The protein localises to the cytoplasm. It localises to the centromere. It is found in the kinetochore. The protein resides in the cytoskeleton. Its subcellular location is the spindle pole. The protein localises to the nucleolus. It localises to the perinuclear region. It catalyses the reaction L-lysyl-[histone] + acetyl-CoA = N(6)-acetyl-L-lysyl-[histone] + CoA + H(+). The enzyme catalyses L-lysyl-[protein] + acetyl-CoA = N(6)-acetyl-L-lysyl-[protein] + CoA + H(+). It carries out the reaction (2E)-butenoyl-CoA + L-lysyl-[protein] = N(6)-(2E)-butenoyl-L-lysyl-[protein] + CoA + H(+). The catalysed reaction is 2-hydroxyisobutanoyl-CoA + L-lysyl-[protein] = N(6)-(2-hydroxyisobutanoyl)-L-lysyl-[protein] + CoA + H(+). It catalyses the reaction (S)-lactoyl-CoA + L-lysyl-[protein] = N(6)-[(S)-lactoyl]-L-lysyl-[protein] + CoA + H(+). Acyltransferase and acetyltransferase activities are activated by phosphorylation and autoacetylation. Autoacetylation activates the histone acetyltransferase activity. Functionally, catalytic subunit of the NuA4 histone acetyltransferase complex, a multiprotein complex involved in transcriptional activation of select genes principally by acetylation of nucleosomal histones H2A and H4. Histone acetylation alters nucleosome-DNA interactions and promotes interaction of the modified histones with other proteins which positively regulate transcription. The NuA4 histone acetyltransferase complex is required for the activation of transcriptional programs associated with proto-oncogene mediated growth induction, tumor suppressor mediated growth arrest and replicative senescence, apoptosis, and DNA repair. The NuA4 complex plays a direct role in repair of DNA double-strand breaks (DSBs) by promoting homologous recombination (HR): the complex inhibits TP53BP1 binding to chromatin via MBTD1, which recognizes and binds histone H4 trimethylated at 'Lys-20' (H4K20me), and KAT5 that catalyzes acetylation of 'Lys-15' of histone H2A (H2AK15ac), thereby blocking the ubiquitination mark required for TP53BP1 localization at DNA breaks. Also involved in DSB repair by mediating acetylation of 'Lys-5' of histone H2AX (H2AXK5ac), promoting NBN/NBS1 assembly at the sites of DNA damage. The NuA4 complex plays a key role in hematopoietic stem cell maintenance and is required to maintain acetylated H2A.Z/H2AZ1 at MYC target genes. The NuA4 complex is also required for spermatid development by promoting acetylation of histones: histone hyperacetylation is required for histone replacement during the transition from round to elongating spermatids. Component of a SWR1-like complex that specifically mediates the removal of histone H2A.Z/H2AZ1 from the nucleosome. Also acetylates non-histone proteins, such as BMAL1, ATM, AURKB, CHKA, CGAS, ERCC4/XPF, LPIN1, TP53/p53, NDC80/HEC1, NR1D2, RAN, SOX4, FOXP3, SQSTM1, ULK1 and RUBCNL/Pacer. Directly acetylates and activates ATM. Promotes nucleotide excision repair (NER) by mediating acetylation of ERCC4/XPF, thereby promoting formation of the ERCC4-ERCC1 complex. Relieves NR1D2-mediated inhibition of APOC3 expression by acetylating NR1D2. Acts as a regulator of regulatory T-cells (Treg) by catalyzing FOXP3 acetylation, thereby promoting FOXP3 transcriptional repressor activity. Involved in skeletal myoblast differentiation by mediating acetylation of SOX4. Catalyzes acetylation of APBB1/FE65, increasing its transcription activator activity. Promotes transcription elongation during the activation phase of the circadian cycle by catalyzing acetylation of BMAL1, promoting elongation of circadian transcripts. Together with GSK3 (GSK3A or GSK3B), acts as a regulator of autophagy: phosphorylated at Ser-86 by GSK3 under starvation conditions, leading to activate acetyltransferase activity and promote acetylation of key autophagy regulators, such as ULK1 and RUBCNL/Pacer. Acts as a regulator of the cGAS-STING innate antiviral response by catalyzing acetylation the N-terminus of CGAS, thereby promoting CGAS DNA-binding and activation. Also regulates lipid metabolism by mediating acetylation of CHKA or LPIN1. Promotes lipolysis of lipid droplets following glucose deprivation by mediating acetylation of isoform 1 of CHKA, thereby promoting monomerization of CHKA and its conversion into a tyrosine-protein kinase. Acts as a regulator of fatty-acid-induced triacylglycerol synthesis by catalyzing acetylation of LPIN1, thereby promoting the synthesis of diacylglycerol. In addition to protein acetyltransferase, can use different acyl-CoA substrates, such as (2E)-butenoyl-CoA (crotonyl-CoA), S-lactoyl-CoA (lactyl-CoA) and 2-hydroxyisobutanoyl-CoA (2-hydroxyisobutyryl-CoA), and is able to mediate protein crotonylation, lactylation and 2-hydroxyisobutyrylation, respectively. Acts as a key regulator of chromosome segregation and kinetochore-microtubule attachment during mitosis by mediating acetylation or crotonylation of target proteins. Catalyzes acetylation of AURKB at kinetochores, increasing AURKB activity and promoting accurate chromosome segregation in mitosis. Acetylates RAN during mitosis, promoting microtubule assembly at mitotic chromosomes. Acetylates NDC80/HEC1 during mitosis, promoting robust kinetochore-microtubule attachment. Catalyzes crotonylation of MAPRE1/EB1, thereby ensuring accurate spindle positioning in mitosis. Catalyzes lactylation of NBN/NBS1 in response to DNA damage, thereby promoting DNA double-strand breaks (DSBs) via homologous recombination (HR). Its function is as follows. (Microbial infection) Catalyzes the acetylation of flavivirus NS3 protein to modulate their RNA-binding and -unwinding activities leading to facilitate viral replication. The chain is Histone acetyltransferase KAT5 from Homo sapiens (Human).